We begin with the raw amino-acid sequence, 736 residues long: DNA topoisomerase 4 subunit A (736 aa).

Residues 32 to 496 form the Topo IIA-type catalytic domain; it reads LPDVRDGLKP…SFEQVTLTNQ (465 aa). The O-(5'-phospho-DNA)-tyrosine intermediate role is filled by Tyr120.

It belongs to the type II topoisomerase GyrA/ParC subunit family. ParC type 1 subfamily. In terms of assembly, heterotetramer composed of ParC and ParE.

Its subcellular location is the cell membrane. The enzyme catalyses ATP-dependent breakage, passage and rejoining of double-stranded DNA.. Topoisomerase IV is essential for chromosome segregation. It relaxes supercoiled DNA. Performs the decatenation events required during the replication of a circular DNA molecule. The chain is DNA topoisomerase 4 subunit A from Rickettsia bellii (strain RML369-C).